Consider the following 425-residue polypeptide: UDP-N-acetylglucosamine 1-carboxyvinyltransferase (425 aa).

Phosphoenolpyruvate is bound at residue 22 to 23 (KN). Residue R93 participates in UDP-N-acetyl-alpha-D-glucosamine binding. The active-site Proton donor is the D117. UDP-N-acetyl-alpha-D-glucosamine is bound by residues D312 and M334.

This sequence belongs to the EPSP synthase family. MurA subfamily.

Its subcellular location is the cytoplasm. It catalyses the reaction phosphoenolpyruvate + UDP-N-acetyl-alpha-D-glucosamine = UDP-N-acetyl-3-O-(1-carboxyvinyl)-alpha-D-glucosamine + phosphate. Its pathway is cell wall biogenesis; peptidoglycan biosynthesis. In terms of biological role, cell wall formation. Adds enolpyruvyl to UDP-N-acetylglucosamine. This chain is UDP-N-acetylglucosamine 1-carboxyvinyltransferase, found in Treponema pallidum (strain Nichols).